Consider the following 730-residue polypeptide: Wall-associated receptor kinase-like 3 (730 aa).

The signal sequence occupies residues 1–25 (MKTKTYNFRYIVASVLTLLMNGSSA). Over 26–357 (ATPPNSNSSS…AKLAHVLRGV (332 aa)) the chain is Extracellular. Asparagine 32, asparagine 38, asparagine 68, asparagine 90, asparagine 119, asparagine 132, asparagine 212, asparagine 233, and asparagine 269 each carry an N-linked (GlcNAc...) asparagine glycan. The tract at residues 283–340 (CLCRYGYFSRMSYRSCYCGSGYRGNPYIRGGCIDIDECEVPNKCGEDTCVNMAGRYSC) is atypical EGF-like. 3 disulfides stabilise this stretch: cysteine 285–cysteine 298, cysteine 320–cysteine 331, and cysteine 326–cysteine 340. The chain crosses the membrane as a helical span at residues 358-378 (LIGLLGLLFFVIGIFGLYKFI). Topologically, residues 379–730 (RKRRRIIRSM…LMEINRIYDS (352 aa)) are cytoplasmic. In terms of domain architecture, Protein kinase spans 428–699 (FSIDRVLGQG…REVSIKLERI (272 aa)). ATP contacts are provided by residues 434–442 (LGQGGQGTV) and lysine 456. The active-site Proton acceptor is aspartate 553. The segment at 703-730 (PKDLDVHTENEEEEEEDQLMEINRIYDS) is disordered. The segment covering 712–721 (NEEEEEEDQL) has biased composition (acidic residues).

The protein belongs to the protein kinase superfamily. Ser/Thr protein kinase family. Preferentially expressed in roots and flowers.

It localises to the membrane. It catalyses the reaction L-seryl-[protein] + ATP = O-phospho-L-seryl-[protein] + ADP + H(+). The enzyme catalyses L-threonyl-[protein] + ATP = O-phospho-L-threonyl-[protein] + ADP + H(+). Its function is as follows. Serine/threonine-protein kinase that may function as a signaling receptor of extracellular matrix component. The chain is Wall-associated receptor kinase-like 3 (WAKL3) from Arabidopsis thaliana (Mouse-ear cress).